The primary structure comprises 320 residues: Methionyl-tRNA formyltransferase (320 aa).

Residue 111–114 coordinates (6S)-5,6,7,8-tetrahydrofolate; the sequence is SLLP.

It belongs to the Fmt family.

It carries out the reaction L-methionyl-tRNA(fMet) + (6R)-10-formyltetrahydrofolate = N-formyl-L-methionyl-tRNA(fMet) + (6S)-5,6,7,8-tetrahydrofolate + H(+). Attaches a formyl group to the free amino group of methionyl-tRNA(fMet). The formyl group appears to play a dual role in the initiator identity of N-formylmethionyl-tRNA by promoting its recognition by IF2 and preventing the misappropriation of this tRNA by the elongation apparatus. This is Methionyl-tRNA formyltransferase from Bifidobacterium adolescentis (strain ATCC 15703 / DSM 20083 / NCTC 11814 / E194a).